A 326-amino-acid polypeptide reads, in one-letter code: Vitamin B12 import system permease protein BtuC (326 aa).

A run of 9 helical transmembrane segments spans residues tryptophan 15–glutamate 35, leucine 61–phenylalanine 81, proline 88–glycine 108, leucine 112–leucine 132, leucine 146–phenylalanine 166, glycine 184–isoleucine 204, glycine 240–isoleucine 260, valine 274–alanine 294, and glutamate 302–leucine 322.

This sequence belongs to the binding-protein-dependent transport system permease family. FecCD subfamily. The complex is composed of two ATP-binding proteins (BtuD), two transmembrane proteins (BtuC) and a solute-binding protein (BtuF).

Its subcellular location is the cell inner membrane. Part of the ABC transporter complex BtuCDF involved in vitamin B12 import. Involved in the translocation of the substrate across the membrane. The sequence is that of Vitamin B12 import system permease protein BtuC from Escherichia coli O7:K1 (strain IAI39 / ExPEC).